We begin with the raw amino-acid sequence, 711 residues long: DNA topoisomerase 1 (711 aa).

Residues 3–134 (KNLVVIESPN…KCQRITFNEI (132 aa)) form the Toprim domain. Glutamate 9 and aspartate 102 together coordinate Mg(2+). In terms of domain architecture, Topo IA-type catalytic spans 150 to 604 (DQSWVQSQFA…FWSNFKEEVK (455 aa)). The interaction with DNA stretch occupies residues 183-188 (SAGRVQ). Tyrosine 340 functions as the O-(5'-phospho-DNA)-tyrosine intermediate in the catalytic mechanism. 2 C4-type zinc fingers span residues 624 to 652 (CPSCASPLLYRYTKRGNEKFVGCSNFPNC) and 673 to 702 (CPECNSQLVKRRTKFNPNKTFVGCSNFPRC).

The protein belongs to the type IA topoisomerase family. As to quaternary structure, monomer. The cofactor is Mg(2+).

It carries out the reaction ATP-independent breakage of single-stranded DNA, followed by passage and rejoining.. Its function is as follows. Releases the supercoiling and torsional tension of DNA, which is introduced during the DNA replication and transcription, by transiently cleaving and rejoining one strand of the DNA duplex. Introduces a single-strand break via transesterification at a target site in duplex DNA. The scissile phosphodiester is attacked by the catalytic tyrosine of the enzyme, resulting in the formation of a DNA-(5'-phosphotyrosyl)-enzyme intermediate and the expulsion of a 3'-OH DNA strand. The free DNA strand then undergoes passage around the unbroken strand, thus removing DNA supercoils. Finally, in the religation step, the DNA 3'-OH attacks the covalent intermediate to expel the active-site tyrosine and restore the DNA phosphodiester backbone. In Mycoplasma pneumoniae (strain ATCC 29342 / M129 / Subtype 1) (Mycoplasmoides pneumoniae), this protein is DNA topoisomerase 1.